Reading from the N-terminus, the 70-residue chain is Turripeptide Ici9.2 (70 aa).

A signal peptide spans 1–20; that stretch reads MKVYCLLLVLLVGLVSQAQG. The 50-residue stretch at 21–70 folds into the Kazal-like domain; the sequence is QLDKKCQTMCTMEYLPVCGSDGTTYPNKCTLTSTACVNQMDITVLHNGEC. 3 cysteine pairs are disulfide-bonded: C26/C56, C30/C49, and C38/C70.

The protein belongs to the conopeptide P-like superfamily. As to expression, expressed by the venom duct.

It localises to the secreted. Its function is as follows. Acts as a neurotoxin by inhibiting an ion channel. May also act as a serine protease inhibitor, since it possess the kazal serine protease inhibitor signature. In Iotyrris cingulifera (Sea snail), this protein is Turripeptide Ici9.2.